The sequence spans 688 residues: PR domain zinc finger protein 8 (688 aa).

Positions 16-131 (KAVQQCLTDI…KDEELLVWYG (116 aa)) constitute an SET domain. Y130 provides a ligand contact to S-adenosyl-L-methionine. The C2H2-type 1 zinc-finger motif lies at 154–182 (YTCLECSQRFQFEFPYVAHLRFRCPKRLH). 2 disordered regions span residues 184–309 (TDAN…GCKG) and 397–506 (EEAA…PARS). Positions 192–208 (QGGGLGTKDHGGGGGGK) are enriched in gly residues. 2 stretches are compositionally biased toward low complexity: residues 209–219 (EQQQQQQQQQQ) and 275–284 (GSSSCVAAPG). Gly residues-rich tracts occupy residues 414-424 (AGGGVAGGGSN) and 470-489 (LGGG…GGGQ). C2H2-type zinc fingers lie at residues 624-647 (NWCA…RSHH) and 665-687 (LKCP…MTSH).

The protein belongs to the class V-like SAM-binding methyltransferase superfamily. In terms of assembly, interacts with BHLHE22. Interacts with EPM2A and NHLRC1. This interaction sequesters EPM2A and NHLRC1 to the nucleus. As to expression, expressed in brain, heart, liver, testes, retina. Highest expression is observed in the retina and hippocampus; moderately expressed in the cortex and cerebellum. In the retina, it is expressed in bipolar and amacrine cells.

It is found in the nucleus. Functionally, probable histone methyltransferase, preferentially acting on 'Lys-9' of histone H3. Histone methyltransferase activity has not been confirmed in other species. Involved in the control of steroidogenesis through transcriptional repression of steroidogenesis marker genes such as CYP17A1 and LHCGR. Forms with BHLHE22 a transcriptional repressor complex controlling genes involved in neural development and neuronal differentiation. In the retina, it is required for rod bipolar and type 2 OFF-cone bipolar cell survival. This chain is PR domain zinc finger protein 8 (Prdm8), found in Mus musculus (Mouse).